A 451-amino-acid polypeptide reads, in one-letter code: Chromosomal replication initiator protein DnaA 2 (451 aa).

Residues Met1–Lys68 form a domain I, interacts with DnaA modulators region. Positions Lys68 to Asp104 are domain II. Residues Glu105–Leu326 are domain III, AAA+ region. ATP-binding residues include Gly156, Gly158, Lys159, and Thr160. The interval His327–Gly451 is domain IV, binds dsDNA.

It belongs to the DnaA family. In terms of assembly, oligomerizes as a right-handed, spiral filament on DNA at oriC.

The protein localises to the cytoplasm. Its function is as follows. Plays an essential role in the initiation and regulation of chromosomal replication. ATP-DnaA binds to the origin of replication (oriC) to initiate formation of the DNA replication initiation complex once per cell cycle. Binds the DnaA box (a 9 base pair repeat at the origin) and separates the double-stranded (ds)DNA. Forms a right-handed helical filament on oriC DNA; dsDNA binds to the exterior of the filament while single-stranded (ss)DNA is stabiized in the filament's interior. The ATP-DnaA-oriC complex binds and stabilizes one strand of the AT-rich DNA unwinding element (DUE), permitting loading of DNA polymerase. After initiation quickly degrades to an ADP-DnaA complex that is not apt for DNA replication. Binds acidic phospholipids. The polypeptide is Chromosomal replication initiator protein DnaA 2 (Protochlamydia amoebophila (strain UWE25)).